The sequence spans 323 residues: CD-NTase-associated protein 12 (323 aa).

A TIR domain is found at arginine 4–threonine 120. Residue glutamate 84 is part of the active site. Residues serine 154–leucine 323 form an STING domain region. Positions 164, 165, 234, 237, 259, 262, and 263 each coordinate 3',3'-c-di-GMP.

This sequence in the C-terminal section; belongs to the bacterial STING family. In terms of assembly, forms homodimers which subsequently form filaments. In vitro in the presence of c-di-GMP forms filaments up to 300 nm in length with an ordered array of parallel-stacked subunits, where the TIR domains form one face of the filament and the STING domains form the other face. Antiparallel double-filament structures are also seen. 3'3'-cGAMP weakly induces filament formation, while 2'3'-cGAMP does not.

It carries out the reaction NAD(+) + H2O = ADP-D-ribose + nicotinamide + H(+). NAD(+) hydrolase activity is strongly stimulated by c-di-GMP, weakly by 3'3'-cGAMP, very weakly by c-di-AMP and not at all by 2'3'-cGAMP. Self-association of TIR domains is required for NADase activity. In terms of biological role, effector protein of a CBASS antiviral system with NAD(+) hydrolase activity. CBASS (cyclic oligonucleotide-based antiphage signaling system) provides immunity against bacteriophage. The CD-NTase protein synthesizes cyclic nucleotides in response to infection; these serve as specific second messenger signals. The signals activate a diverse range of effectors, leading to bacterial cell death and thus abortive phage infection. A type I-D(GG) CBASS system. Upon activation by 3'3'-c-di-GMP forms filaments which hydrolyze NAD(+); filament formation is required for enzyme activation. Induction in an E.coli strain that synthesizes c-di-GMP leads to significant growth inhibition. Binds c-di-GMP and 3'3'-cGAMP (3'3'-cyclic GMP-AMP), but not c-di-AMP, 2'3'-cGAMP or cUMP-AMP. In Sphingobacterium faecium (strain DSM 11690 / JCM 21820 / NBRC 15299 / NCIMB 13408 / KS 0470), this protein is CD-NTase-associated protein 12.